Reading from the N-terminus, the 331-residue chain is Adenine deaminase (331 aa).

Zn(2+) is bound by residues histidine 17, histidine 19, and histidine 197. Glutamate 200 (proton donor) is an active-site residue. Position 278 (aspartate 278) interacts with Zn(2+). Substrate is bound at residue aspartate 279.

This sequence belongs to the metallo-dependent hydrolases superfamily. Adenosine and AMP deaminases family. Adenine deaminase type 2 subfamily. Zn(2+) is required as a cofactor.

The enzyme catalyses adenine + H2O + H(+) = hypoxanthine + NH4(+). Its function is as follows. Catalyzes the hydrolytic deamination of adenine to hypoxanthine. Plays an important role in the purine salvage pathway and in nitrogen catabolism. This is Adenine deaminase from Wolinella succinogenes (strain ATCC 29543 / DSM 1740 / CCUG 13145 / JCM 31913 / LMG 7466 / NCTC 11488 / FDC 602W) (Vibrio succinogenes).